The following is a 487-amino-acid chain: Glutamyl-tRNA(Gln) amidotransferase subunit A (487 aa).

Catalysis depends on charge relay system residues lysine 76 and serine 151. Serine 175 functions as the Acyl-ester intermediate in the catalytic mechanism.

Belongs to the amidase family. GatA subfamily. As to quaternary structure, heterotrimer of A, B and C subunits.

The enzyme catalyses L-glutamyl-tRNA(Gln) + L-glutamine + ATP + H2O = L-glutaminyl-tRNA(Gln) + L-glutamate + ADP + phosphate + H(+). Allows the formation of correctly charged Gln-tRNA(Gln) through the transamidation of misacylated Glu-tRNA(Gln) in organisms which lack glutaminyl-tRNA synthetase. The reaction takes place in the presence of glutamine and ATP through an activated gamma-phospho-Glu-tRNA(Gln). The sequence is that of Glutamyl-tRNA(Gln) amidotransferase subunit A from Azoarcus sp. (strain BH72).